A 313-amino-acid chain; its full sequence is Sororin-like protein 1 (313 aa).

The short motif at 44–46 (FGF) is the FGF motif element. Positions 105–287 (ADENQQSVPT…NDNLKELTPG (183 aa)) are disordered. A compositionally biased stretch (polar residues) spans 107–118 (ENQQSVPTVSIA). Positions 123–134 (PELPPSSSPLLP) are enriched in pro residues. Residues 135-154 (PNGSESSSPIPLSLLSTSSL) are compositionally biased toward low complexity. The span at 155 to 170 (QQRKITPSNLSNTSKP) shows a compositional bias: polar residues. Residues 184–196 (HGHHLTRLRKKRR) are compositionally biased toward basic residues. Residues 249-264 (EKKILKTYHSQDKDTA) show a composition bias toward basic and acidic residues. A C-terminal Sororin domain region spans residues 288-310 (KKEYLKSIKKYFQDVDDYQLHVV).

Belongs to the sororin family. As to quaternary structure, interacts with Pds5 and Psm3.

It localises to the nucleus. In terms of biological role, regulator of sister chromatid cohesion in mitosis stabilizing cohesin complex association with chromatin. Antagonizes the action of wpl1 which stimulates cohesin dissociation from chromatin. Cohesion ensures that chromosome partitioning is accurate in dividing cells and may play an important role in DNA repair. The protein is Sororin-like protein 1 of Schizosaccharomyces pombe (strain 972 / ATCC 24843) (Fission yeast).